Here is a 477-residue protein sequence, read N- to C-terminus: Diacylglycerol O-acyltransferase 1-2 (477 aa).

The tract at residues 1–48 (MAPPPSLAPDRGGGEPDDALRLRARAAAAAGDAPAPQQQQEQRHQEQQ) is disordered. The segment covering 12–21 (GGGEPDDALR) has biased composition (basic and acidic residues). Positions 25–40 (RAAAAAGDAPAPQQQQ) are enriched in low complexity. The next 7 helical transmembrane spans lie at 79 to 99 (HAGL…RLII), 123 to 143 (WPLL…LMVE), 155 to 175 (VVIL…VVVI), 182 to 202 (VLSG…LVSF), 230 to 250 (NIKW…TLCY), 263 to 283 (GWVV…GFII), and 319 to 339 (VWLC…AELL). Positions 346–352 (FYKDWWN) match the FYXDWWN motif motif. The next 3 membrane-spanning stretches (helical) occupy residues 387–407 (GVAI…CVAV), 409–429 (CHIF…LVFL), and 442–462 (VGNM…CVLL). Residue His401 is part of the active site.

Belongs to the membrane-bound acyltransferase family. Sterol o-acyltransferase subfamily.

It is found in the endoplasmic reticulum membrane. The catalysed reaction is an acyl-CoA + a 1,2-diacyl-sn-glycerol = a triacyl-sn-glycerol + CoA. The protein operates within glycerolipid metabolism; triacylglycerol biosynthesis. In terms of biological role, involved in triacylglycerol (TAG) synthesis. Catalyzes the acylation of the sn-3 hydroxy group of sn-1,2-diacylglycerol using acyl-CoA. In Oryza sativa subsp. japonica (Rice), this protein is Diacylglycerol O-acyltransferase 1-2.